Consider the following 428-residue polypeptide: 5'-nucleotidase domain-containing protein 4 (428 aa).

The active-site Nucleophile is the D22. Mg(2+) is bound by residues D22, D24, and D317. The active-site Proton donor is D24.

This sequence belongs to the 5'(3')-deoxyribonucleotidase family.

The polypeptide is 5'-nucleotidase domain-containing protein 4 (NT5DC4) (Homo sapiens (Human)).